Here is a 168-residue protein sequence, read N- to C-terminus: Plastocyanin, chloroplastic (168 aa).

A chloroplast-targeting transit peptide spans 1–69 (MATVTSTTVA…SAVLASNALA (69 aa)). In terms of domain architecture, Plastocyanin-like spans 70–168 (VEVLLGASDG…AGMVGQVTVN (99 aa)). Residues His106, Cys153, His156, and Met161 each contribute to the Cu cation site.

This sequence belongs to the plastocyanin family. It depends on Cu(2+) as a cofactor.

The protein localises to the plastid. It is found in the chloroplast thylakoid membrane. Participates in electron transfer between P700 and the cytochrome b6-f complex in photosystem I. The polypeptide is Plastocyanin, chloroplastic (PETE) (Pisum sativum (Garden pea)).